We begin with the raw amino-acid sequence, 529 residues long: Bifunctional purine biosynthesis protein PurH (529 aa).

The 148-residue stretch at 1–148 (MNNARPIRRA…KNHKDVVIVV (148 aa)) folds into the MGS-like domain.

It belongs to the PurH family.

The catalysed reaction is (6R)-10-formyltetrahydrofolate + 5-amino-1-(5-phospho-beta-D-ribosyl)imidazole-4-carboxamide = 5-formamido-1-(5-phospho-D-ribosyl)imidazole-4-carboxamide + (6S)-5,6,7,8-tetrahydrofolate. It catalyses the reaction IMP + H2O = 5-formamido-1-(5-phospho-D-ribosyl)imidazole-4-carboxamide. It functions in the pathway purine metabolism; IMP biosynthesis via de novo pathway; 5-formamido-1-(5-phospho-D-ribosyl)imidazole-4-carboxamide from 5-amino-1-(5-phospho-D-ribosyl)imidazole-4-carboxamide (10-formyl THF route): step 1/1. It participates in purine metabolism; IMP biosynthesis via de novo pathway; IMP from 5-formamido-1-(5-phospho-D-ribosyl)imidazole-4-carboxamide: step 1/1. The chain is Bifunctional purine biosynthesis protein PurH from Shewanella amazonensis (strain ATCC BAA-1098 / SB2B).